We begin with the raw amino-acid sequence, 132 residues long: Small ribosomal subunit protein uS8 (132 aa).

Belongs to the universal ribosomal protein uS8 family. In terms of assembly, part of the 30S ribosomal subunit. Contacts proteins S5 and S12.

In terms of biological role, one of the primary rRNA binding proteins, it binds directly to 16S rRNA central domain where it helps coordinate assembly of the platform of the 30S subunit. The protein is Small ribosomal subunit protein uS8 of Mycobacterium sp. (strain KMS).